Consider the following 273-residue polypeptide: Mediator of RNA polymerase II transcription subunit 18 (273 aa).

Residues 90 to 106 (GAQSSAASSGDPDAPMS) are compositionally biased toward low complexity. The disordered stretch occupies residues 90–114 (GAQSSAASSGDPDAPMSGTDTGTNF).

It belongs to the Mediator complex subunit 18 family. As to quaternary structure, component of the Mediator complex.

It localises to the nucleus. In terms of biological role, component of the Mediator complex, a coactivator involved in the regulated transcription of nearly all RNA polymerase II-dependent genes. Mediator functions as a bridge to convey information from gene-specific regulatory proteins to the basal RNA polymerase II transcription machinery. Mediator is recruited to promoters by direct interactions with regulatory proteins and serves as a scaffold for the assembly of a functional preinitiation complex with RNA polymerase II and the general transcription factors. This chain is Mediator of RNA polymerase II transcription subunit 18 (srb5), found in Aspergillus oryzae (strain ATCC 42149 / RIB 40) (Yellow koji mold).